The chain runs to 461 residues: D-phenylhydantoinase (461 aa).

A divalent metal cation contacts are provided by H59, H61, and K151. At K151 the chain carries N6-carboxylysine. Position 156 (Y156) interacts with substrate. A divalent metal cation contacts are provided by H182 and H239. S286 is a substrate binding site. Residue D313 participates in a divalent metal cation binding. N335 contributes to the substrate binding site.

This sequence belongs to the metallo-dependent hydrolases superfamily. Hydantoinase/dihydropyrimidinase family. In terms of assembly, homotetramer. The cofactor is Zn(2+). Ni(2+) serves as cofactor. Co(2+) is required as a cofactor. Requires Mn(2+) as cofactor. In terms of processing, carboxylation allows a single lysine to coordinate two divalent metal cations.

The enzyme catalyses D-5-phenylhydantoin + H2O = N-carbamoyl-D-phenylglycine + H(+). Its function is as follows. Catalyzes the stereospecific hydrolysis of the cyclic amide bond of D-hydantoin derivatives with an aromatic side chains at the 5'-position. Has no activity on dihydropyrimidines. The physiological function is unknown. This is D-phenylhydantoinase (hyuA) from Escherichia coli (strain K12).